Here is a 510-residue protein sequence, read N- to C-terminus: Bifunctional purine biosynthesis protein PurH (510 aa).

The MGS-like domain maps to 1-145 (MTKRALLSVS…KNFAAVLPIV (145 aa)).

Belongs to the PurH family.

The enzyme catalyses (6R)-10-formyltetrahydrofolate + 5-amino-1-(5-phospho-beta-D-ribosyl)imidazole-4-carboxamide = 5-formamido-1-(5-phospho-D-ribosyl)imidazole-4-carboxamide + (6S)-5,6,7,8-tetrahydrofolate. It catalyses the reaction IMP + H2O = 5-formamido-1-(5-phospho-D-ribosyl)imidazole-4-carboxamide. It participates in purine metabolism; IMP biosynthesis via de novo pathway; 5-formamido-1-(5-phospho-D-ribosyl)imidazole-4-carboxamide from 5-amino-1-(5-phospho-D-ribosyl)imidazole-4-carboxamide (10-formyl THF route): step 1/1. Its pathway is purine metabolism; IMP biosynthesis via de novo pathway; IMP from 5-formamido-1-(5-phospho-D-ribosyl)imidazole-4-carboxamide: step 1/1. This chain is Bifunctional purine biosynthesis protein PurH, found in Lactiplantibacillus plantarum (strain ATCC BAA-793 / NCIMB 8826 / WCFS1) (Lactobacillus plantarum).